Consider the following 229-residue polypeptide: Orotidine 5'-phosphate decarboxylase (229 aa).

Substrate contacts are provided by residues D10, K32, 59 to 68 (DLKFHDIPNT), T119, R180, Q189, G209, and R210. The active-site Proton donor is the K61.

It belongs to the OMP decarboxylase family. Type 1 subfamily. As to quaternary structure, homodimer.

It catalyses the reaction orotidine 5'-phosphate + H(+) = UMP + CO2. It functions in the pathway pyrimidine metabolism; UMP biosynthesis via de novo pathway; UMP from orotate: step 2/2. Catalyzes the decarboxylation of orotidine 5'-monophosphate (OMP) to uridine 5'-monophosphate (UMP). In Legionella pneumophila (strain Corby), this protein is Orotidine 5'-phosphate decarboxylase.